The chain runs to 73 residues: Mating-type pheromone BBP1(3) (73 aa).

Residues 1–41 are disordered; that stretch reads MASSVLARPGPSTVLPAMTRPPPPMAHRAAATPSFARSSQP. Cysteine methyl ester is present on Cys70. A lipid anchor (S-farnesyl cysteine) is attached at Cys70. The propeptide at 71–73 is removed in mature form; the sequence is VVA.

The protein localises to the cell membrane. Activates B-regulated development. The protein is Mating-type pheromone BBP1(3) (BBP1(3)) of Schizophyllum commune (Split gill fungus).